The chain runs to 515 residues: Folate synthesis bifunctional protein, mitochondrial (515 aa).

Residues 1 to 28 (MSILKCLGVRGNQLCAARNYLKVLGFSS) constitute a mitochondrion transit peptide. The segment at 47–172 (VIALGSNVGD…PFVMAPLMDL (126 aa)) is HPPK. The Pterin-binding domain occupies 230–498 (TLVMGILNLT…NVKDNLDAVK (269 aa)). The segment at 232–515 (VMGILNLTPD…QKSSPIKFKQ (284 aa)) is DHPS. Mg(2+) is bound at residue N237. (7,8-dihydropterin-6-yl)methyl diphosphate is bound by residues T277, D314, N333, D406, K451, and 486–488 (RVH).

It in the N-terminal section; belongs to the HPPK family. In the C-terminal section; belongs to the DHPS family. In terms of assembly, homomultimer. Mg(2+) serves as cofactor.

The protein localises to the mitochondrion. The enzyme catalyses 6-hydroxymethyl-7,8-dihydropterin + ATP = (7,8-dihydropterin-6-yl)methyl diphosphate + AMP + H(+). It catalyses the reaction (7,8-dihydropterin-6-yl)methyl diphosphate + 4-aminobenzoate = 7,8-dihydropteroate + diphosphate. It participates in cofactor biosynthesis; tetrahydrofolate biosynthesis; 2-amino-4-hydroxy-6-hydroxymethyl-7,8-dihydropteridine diphosphate from 7,8-dihydroneopterin triphosphate: step 4/4. The protein operates within cofactor biosynthesis; tetrahydrofolate biosynthesis; 7,8-dihydrofolate from 2-amino-4-hydroxy-6-hydroxymethyl-7,8-dihydropteridine diphosphate and 4-aminobenzoate: step 1/2. In terms of biological role, catalyzes the first two consecutive steps of tetrahydrofolate biosynthesis. In Pisum sativum (Garden pea), this protein is Folate synthesis bifunctional protein, mitochondrial.